Consider the following 231-residue polypeptide: MSQSTNQIIAIVPAAGIGSRMGAEVPKQYLALNEQTILGHTLDCLLNHPQIAQVIVALNPEDKHFCLLPQAQHKKLLTVTGGNERADSVLAALQQADENSWVLVHDAARPCLSHLDIDKLIASTSTFPQGAILGAPVRDTMKRTGEHGEISNTVCRDRLWHALTPQYFQAKQLKVNLRAALAAGAKVTDEASAMEWAGVMPGIVSGRADNIKVTHPDDLQLASLFLKNLGR.

The protein belongs to the IspD/TarI cytidylyltransferase family. IspD subfamily.

The enzyme catalyses 2-C-methyl-D-erythritol 4-phosphate + CTP + H(+) = 4-CDP-2-C-methyl-D-erythritol + diphosphate. The protein operates within isoprenoid biosynthesis; isopentenyl diphosphate biosynthesis via DXP pathway; isopentenyl diphosphate from 1-deoxy-D-xylulose 5-phosphate: step 2/6. Functionally, catalyzes the formation of 4-diphosphocytidyl-2-C-methyl-D-erythritol from CTP and 2-C-methyl-D-erythritol 4-phosphate (MEP). The chain is 2-C-methyl-D-erythritol 4-phosphate cytidylyltransferase from Shewanella piezotolerans (strain WP3 / JCM 13877).